The primary structure comprises 252 residues: Pantothenate synthetase (252 aa).

Position 29 to 36 (29 to 36 (MGNLHAGH)) interacts with ATP. Histidine 36 (proton donor) is an active-site residue. Glutamine 60 serves as a coordination point for (R)-pantoate. Residue glutamine 60 coordinates beta-alanine. 146 to 149 (GEKD) provides a ligand contact to ATP. Glutamine 152 is a binding site for (R)-pantoate. ATP contacts are provided by residues valine 175 and 183 to 186 (CSSR).

It belongs to the pantothenate synthetase family. Homodimer.

It localises to the cytoplasm. It carries out the reaction (R)-pantoate + beta-alanine + ATP = (R)-pantothenate + AMP + diphosphate + H(+). It participates in cofactor biosynthesis; (R)-pantothenate biosynthesis; (R)-pantothenate from (R)-pantoate and beta-alanine: step 1/1. In terms of biological role, catalyzes the condensation of pantoate with beta-alanine in an ATP-dependent reaction via a pantoyl-adenylate intermediate. In Legionella pneumophila (strain Lens), this protein is Pantothenate synthetase.